The primary structure comprises 81 residues: Putative membrane protein insertion efficiency factor (81 aa).

Belongs to the UPF0161 family.

Its subcellular location is the cell inner membrane. In terms of biological role, could be involved in insertion of integral membrane proteins into the membrane. This is Putative membrane protein insertion efficiency factor from Pseudomonas syringae pv. syringae (strain B728a).